The primary structure comprises 439 residues: S-layer protein (439 aa).

A signal peptide spans 1-30 (MKKNLRIVSAAAAALLAVAPIAATAMPVNA).

Glycosylated.

The protein localises to the secreted. Its subcellular location is the cell wall. It is found in the S-layer. Functionally, the S-layer is a paracrystalline mono-layered assembly of proteins which coat the surface of bacteria. In Lactobacillus helveticus (Lactobacillus suntoryeus), this protein is S-layer protein (slpH).